The following is a 278-amino-acid chain: Cation-dependent mannose-6-phosphate receptor (278 aa).

Residues 1–21 (MFPLSGCWRTELLLLLLLAVA) form the signal peptide. Topologically, residues 22 to 188 (VRESWQIEEK…ACSPEVSHLS (167 aa)) are lumenal. The MRH domain maps to 31–182 (KSCDLVGEKD…EMDSSLACSP (152 aa)). A disulfide bond links C33 and C79. N-linked (GlcNAc...) asparagine glycosylation is found at N58, N84, N95, N108, and N114. 2 disulfide bridges follow: C133–C168 and C146–C180. Residues 189 to 209 (VGSILLVIFASLVAVYIIGGF) form a helical membrane-spanning segment. Over 210-278 (LYQRLVVGAK…EERDDHLLPM (69 aa)) the chain is Cytoplasmic. The interval 256-278 (YRGVGDDQLGEESEERDDHLLPM) is disordered. S268 is subject to Phosphoserine.

As to quaternary structure, homodimer. Binds GGA1, GGA2 and GGA3.

Its subcellular location is the lysosome membrane. Functionally, transport of phosphorylated lysosomal enzymes from the Golgi complex and the cell surface to lysosomes. Lysosomal enzymes bearing phosphomannosyl residues bind specifically to mannose-6-phosphate receptors in the Golgi apparatus and the resulting receptor-ligand complex is transported to an acidic prelyosomal compartment where the low pH mediates the dissociation of the complex. The chain is Cation-dependent mannose-6-phosphate receptor (M6pr) from Rattus norvegicus (Rat).